A 179-amino-acid polypeptide reads, in one-letter code: Large ribosomal subunit protein uL5 (179 aa).

This sequence belongs to the universal ribosomal protein uL5 family. In terms of assembly, part of the 50S ribosomal subunit; part of the 5S rRNA/L5/L18/L25 subcomplex. Contacts the 5S rRNA and the P site tRNA. Forms a bridge to the 30S subunit in the 70S ribosome.

Functionally, this is one of the proteins that bind and probably mediate the attachment of the 5S RNA into the large ribosomal subunit, where it forms part of the central protuberance. In the 70S ribosome it contacts protein S13 of the 30S subunit (bridge B1b), connecting the 2 subunits; this bridge is implicated in subunit movement. Contacts the P site tRNA; the 5S rRNA and some of its associated proteins might help stabilize positioning of ribosome-bound tRNAs. This Parasynechococcus marenigrum (strain WH8102) protein is Large ribosomal subunit protein uL5.